A 281-amino-acid chain; its full sequence is 2,3,4,5-tetrahydropyridine-2,6-dicarboxylate N-succinyltransferase (281 aa).

This sequence belongs to the transferase hexapeptide repeat family.

Its subcellular location is the cytoplasm. The enzyme catalyses (S)-2,3,4,5-tetrahydrodipicolinate + succinyl-CoA + H2O = (S)-2-succinylamino-6-oxoheptanedioate + CoA. Its pathway is amino-acid biosynthesis; L-lysine biosynthesis via DAP pathway; LL-2,6-diaminopimelate from (S)-tetrahydrodipicolinate (succinylase route): step 1/3. In Methylobacterium sp. (strain 4-46), this protein is 2,3,4,5-tetrahydropyridine-2,6-dicarboxylate N-succinyltransferase.